The primary structure comprises 2347 residues: Proto-oncogene tyrosine-protein kinase ROS (2347 aa).

A signal peptide spans 1-27; that stretch reads MKNIYCLIPKLVNFATLGCLWISVVQC. Residues 28-1859 lie on the Extracellular side of the membrane; it reads TVLNSCLKSC…LVGDDFWIPE (1832 aa). Asn52, Asn114, and Asn123 each carry an N-linked (GlcNAc...) asparagine glycan. 2 Fibronectin type-III domains span residues 101 to 196 and 197 to 285; these read LPTA…VPET and APLI…SSSA. N-linked (GlcNAc...) asparagine glycosylation is found at Asn324, Asn352, Asn396, Asn471, Asn607, Asn628, Asn706, Asn714, Asn732, Asn939, Asn961, Asn1015, Asn1087, Asn1090, Asn1095, Asn1211, Asn1272, Asn1330, Asn1458, Asn1461, Asn1474, Asn1499, Asn1565, Asn1669, Asn1715, Asn1738, and Asn1808. The Fibronectin type-III 3 domain occupies 557 to 671; it reads LPGRPQELSV…EPSVGTTLVP (115 aa). 2 Fibronectin type-III domains span residues 947 to 1042 and 1043 to 1150; these read IPDS…TVPS and APEN…TSEI. 4 Fibronectin type-III domains span residues 1450–1556, 1557–1656, 1658–1751, and 1752–1854; these read DTVE…TKNG, VPEA…VEMF, TPEK…TKAG, and VPNK…VGDD. Residues 1860 to 1882 form a helical membrane-spanning segment; the sequence is TSFILTIIVGIFLVVTIPLTFVW. Residues 1883–2347 are Cytoplasmic-facing; that stretch reads HRRLKNQKSA…THSGYGDGSD (465 aa). One can recognise a Protein kinase domain in the interval 1945–2222; that stretch reads LTLRLLLGSG…DQLQLFRNFF (278 aa). ATP-binding positions include 1951-1959 and Lys1980; that span reads LGSGAFGEV. The active-site Proton acceptor is the Asp2079. Tyr2274 is modified (phosphotyrosine; by autocatalysis). Positions 2284-2311 are disordered; sequence GEEKSEGPLGSQESESCGLRKEEKEPHA. Positions 2301-2311 are enriched in basic and acidic residues; that stretch reads GLRKEEKEPHA. Residue Tyr2334 is modified to Phosphotyrosine; by autocatalysis.

The protein belongs to the protein kinase superfamily. Tyr protein kinase family. Insulin receptor subfamily. In terms of assembly, interacts with PTPN6 (via SH2 1 domain); the interaction is direct and promotes ROS1 dephosphorylation. Interacts with PTPN11; may activate the PI3 kinase-mTOR signaling pathway. Interacts with VAV3; constitutive interaction mediating VAV3 phosphorylation. In terms of processing, phosphorylated. Probably autophosphorylates. Phosphorylation at Tyr-2274 is required for the interaction with PTPN6 that mediates ROS1 dephosphorylation. Phosphorylation at Tyr-2274 stimulates the kinase activity and the activation of the ERK1 signaling cascade. Phosphorylation at Tyr-2274 and/or Tyr-2334 recruits PTPN11. In terms of tissue distribution, expressed in brain. Expression is increased in primary gliomas.

Its subcellular location is the cell membrane. It catalyses the reaction L-tyrosyl-[protein] + ATP = O-phospho-L-tyrosyl-[protein] + ADP + H(+). With respect to regulation, inhibited by dephosphorylation by PTPN6. Its function is as follows. Receptor tyrosine kinase (RTK) that plays a role in epithelial cell differentiation and regionalization of the proximal epididymal epithelium. NELL2 is an endogenous ligand for ROS1. Upon endogenous stimulation by NELL2, ROS1 activates the intracellular signaling pathway and triggers epididymal epithelial differentiation and subsequent sperm maturation. May activate several downstream signaling pathways related to cell differentiation, proliferation, growth and survival including the PI3 kinase-mTOR signaling pathway. Mediates the phosphorylation of PTPN11, an activator of this pathway. May also phosphorylate and activate the transcription factor STAT3 to control anchorage-independent cell growth. Mediates the phosphorylation and the activation of VAV3, a guanine nucleotide exchange factor regulating cell morphology. May activate other downstream signaling proteins including AKT1, MAPK1, MAPK3, IRS1 and PLCG2. The polypeptide is Proto-oncogene tyrosine-protein kinase ROS (ROS1) (Homo sapiens (Human)).